The chain runs to 78 residues: DNA gyrase inhibitor YacG (78 aa).

4 residues coordinate Zn(2+): C7, C10, C26, and C30.

The protein belongs to the DNA gyrase inhibitor YacG family. As to quaternary structure, interacts with GyrB. It depends on Zn(2+) as a cofactor.

In terms of biological role, inhibits all the catalytic activities of DNA gyrase by preventing its interaction with DNA. Acts by binding directly to the C-terminal domain of GyrB, which probably disrupts DNA binding by the gyrase. This chain is DNA gyrase inhibitor YacG, found in Colwellia psychrerythraea (strain 34H / ATCC BAA-681) (Vibrio psychroerythus).